Here is a 353-residue protein sequence, read N- to C-terminus: Putative glycosyltransferase TagX (353 aa).

The protein belongs to the glycosyltransferase 2 family.

In Staphylococcus aureus (strain MSSA476), this protein is Putative glycosyltransferase TagX (tagX).